Here is a 206-residue protein sequence, read N- to C-terminus: Ribosomal RNA large subunit methyltransferase E (206 aa).

S-adenosyl-L-methionine contacts are provided by glycine 61, tryptophan 63, aspartate 81, aspartate 97, and aspartate 122. Residue lysine 162 is the Proton acceptor of the active site.

Belongs to the class I-like SAM-binding methyltransferase superfamily. RNA methyltransferase RlmE family.

It is found in the cytoplasm. It catalyses the reaction uridine(2552) in 23S rRNA + S-adenosyl-L-methionine = 2'-O-methyluridine(2552) in 23S rRNA + S-adenosyl-L-homocysteine + H(+). In terms of biological role, specifically methylates the uridine in position 2552 of 23S rRNA at the 2'-O position of the ribose in the fully assembled 50S ribosomal subunit. The protein is Ribosomal RNA large subunit methyltransferase E of Neisseria gonorrhoeae (strain NCCP11945).